The following is a 277-amino-acid chain: PHD finger protein ALFIN-LIKE 9 (277 aa).

2 disordered regions span residues 138–206 (KSKA…EEEH) and 255–277 (PSCS…ARPS). Residues 145–160 (SANNHSNSKSKSSNKT) are compositionally biased toward low complexity. A PHD-type zinc finger spans residues 208–260 (ETLCGACGESYGADEFWICCDICEKWFHGKCVKITPAKAEHIKQYKCPSCSGG). The segment covering 259–270 (GGNGGGGGGSGN) has biased composition (gly residues).

It belongs to the Alfin family. As to quaternary structure, interacts with H3K4me3 and to a lesser extent with H3K4me2.

The protein localises to the nucleus. In terms of biological role, histone-binding component that specifically recognizes H3 tails trimethylated on 'Lys-4' (H3K4me3), which mark transcription start sites of virtually all active genes. This is PHD finger protein ALFIN-LIKE 9 from Oryza sativa subsp. indica (Rice).